The primary structure comprises 411 residues: Putative competence-damage inducible protein (411 aa).

It belongs to the CinA family.

In Caldicellulosiruptor saccharolyticus (strain ATCC 43494 / DSM 8903 / Tp8T 6331), this protein is Putative competence-damage inducible protein.